A 1096-amino-acid polypeptide reads, in one-letter code: Carbamoyl phosphate synthase large chain (1096 aa).

A carboxyphosphate synthetic domain region spans residues 1-402; it reads MPKRDDINSV…ALQKALRSLE (402 aa). ATP contacts are provided by arginine 129, arginine 169, glycine 175, glycine 176, glutamate 208, isoleucine 210, glutamate 215, glycine 241, valine 242, histidine 243, glutamine 285, and glutamate 299. Positions 133-328 constitute an ATP-grasp 1 domain; sequence KDLVIESGAD…IAKIAAKLAI (196 aa). Mg(2+) contacts are provided by glutamine 285, glutamate 299, and asparagine 301. Mn(2+) contacts are provided by glutamine 285, glutamate 299, and asparagine 301. Residues 403-547 are oligomerization domain; that stretch reads KRGSSFHWGA…YSSYDSETEI (145 aa). The segment at 548–950 is carbamoyl phosphate synthetic domain; it reads VPSDRRKVII…AFAKSQEAAF (403 aa). An ATP-grasp 2 domain is found at 676–870; it reads SGILDAAGLV…LAKAASLVMV (195 aa). Arginine 712, arginine 754, leucine 756, glutamate 761, glycine 786, isoleucine 787, histidine 788, serine 789, glutamine 829, and glutamate 841 together coordinate ATP. Mg(2+)-binding residues include glutamine 829, glutamate 841, and asparagine 843. Residues glutamine 829, glutamate 841, and asparagine 843 each coordinate Mn(2+). The region spanning 951 to 1095 is the MGS-like domain; sequence GGLPLSGTVF…QDYAIAREAR (145 aa). The interval 951 to 1096 is allosteric domain; it reads GGLPLSGTVF…DYAIAREARR (146 aa).

This sequence belongs to the CarB family. As to quaternary structure, composed of two chains; the small (or glutamine) chain promotes the hydrolysis of glutamine to ammonia, which is used by the large (or ammonia) chain to synthesize carbamoyl phosphate. Tetramer of heterodimers (alpha,beta)4. Mg(2+) serves as cofactor. Requires Mn(2+) as cofactor.

The enzyme catalyses hydrogencarbonate + L-glutamine + 2 ATP + H2O = carbamoyl phosphate + L-glutamate + 2 ADP + phosphate + 2 H(+). The catalysed reaction is hydrogencarbonate + NH4(+) + 2 ATP = carbamoyl phosphate + 2 ADP + phosphate + 2 H(+). It participates in amino-acid biosynthesis; L-arginine biosynthesis; carbamoyl phosphate from bicarbonate: step 1/1. Its pathway is pyrimidine metabolism; UMP biosynthesis via de novo pathway; (S)-dihydroorotate from bicarbonate: step 1/3. In terms of biological role, large subunit of the glutamine-dependent carbamoyl phosphate synthetase (CPSase). CPSase catalyzes the formation of carbamoyl phosphate from the ammonia moiety of glutamine, carbonate, and phosphate donated by ATP, constituting the first step of 2 biosynthetic pathways, one leading to arginine and/or urea and the other to pyrimidine nucleotides. The large subunit (synthetase) binds the substrates ammonia (free or transferred from glutamine from the small subunit), hydrogencarbonate and ATP and carries out an ATP-coupled ligase reaction, activating hydrogencarbonate by forming carboxy phosphate which reacts with ammonia to form carbamoyl phosphate. The polypeptide is Carbamoyl phosphate synthase large chain (Clavibacter sepedonicus (Clavibacter michiganensis subsp. sepedonicus)).